Reading from the N-terminus, the 313-residue chain is N-acetyl-gamma-glutamyl-phosphate reductase (313 aa).

Residue Cys117 is part of the active site.

This sequence belongs to the NAGSA dehydrogenase family. Type 2 subfamily.

Its subcellular location is the cytoplasm. It catalyses the reaction N-acetyl-L-glutamate 5-semialdehyde + phosphate + NADP(+) = N-acetyl-L-glutamyl 5-phosphate + NADPH + H(+). It functions in the pathway amino-acid biosynthesis; L-arginine biosynthesis; N(2)-acetyl-L-ornithine from L-glutamate: step 3/4. Its function is as follows. Catalyzes the NADPH-dependent reduction of N-acetyl-5-glutamyl phosphate to yield N-acetyl-L-glutamate 5-semialdehyde. The polypeptide is N-acetyl-gamma-glutamyl-phosphate reductase (Burkholderia orbicola (strain MC0-3)).